The sequence spans 453 residues: Frizzled/smoothened-like sans CRD protein G (453 aa).

An N-terminal signal peptide occupies residues 1–24 (MIYILKNFIIILFFLLIILKRIES). The Extracellular segment spans residues 25 to 89 (QSLPSLPSPT…PFFTLDEWNK (65 aa)). 2 N-linked (GlcNAc...) asparagine glycosylation sites follow: Asn49 and Asn67. A helical membrane pass occupies residues 90-110 (FLYMSLVMGTISFLCGLFLLI). The Cytoplasmic segment spans residues 111 to 124 (TYSPIVNKTHNRHT). Residues 125–145 (IGVMCMSFGVCLAMCSDMWNF) traverse the membrane as a helical segment. The Extracellular segment spans residues 146–170 (GSNFTDQKSICPSPGQYLTTSNSRC). Asn148 is a glycosylation site (N-linked (GlcNAc...) asparagine). A helical membrane pass occupies residues 171–191 (LGSGIVLQFGGVFGFLNWTLL). At 192-209 (SFDLFMNIKGIITKNYDK) the chain is on the cytoplasmic side. The helical transmembrane segment at 210–230 (YYFVATFIIAIIFTFVPIVND) threads the bilayer. Over 231 to 250 (QYSMSYIGLGCWLGSAVYQL) the chain is Extracellular. The chain crosses the membrane as a helical span at residues 251–271 (IFFWILLSICLIVSSVFIILI). The Cytoplasmic portion of the chain corresponds to 272–296 (LKEIYIIIKQSKQKTSLKGNIRPLL). The helical transmembrane segment at 297-317 (CITVTSFAFFYMFFYYISIVI) threads the bilayer. Topologically, residues 318 to 352 (EGDYYERILNEYTDCLMDPTKDVSECKFPRMSVAN) are extracellular. The helical transmembrane segment at 353-373 (EFVFLLCLRLLGIGAFIFYGI) threads the bilayer. The Cytoplasmic segment spans residues 374-453 (NKEVKKIWLN…DDNFKPIIIK (80 aa)).

Belongs to the G-protein coupled receptor Fz/Smo family.

It is found in the membrane. The polypeptide is Frizzled/smoothened-like sans CRD protein G (fscG) (Dictyostelium discoideum (Social amoeba)).